A 445-amino-acid polypeptide reads, in one-letter code: Guanosine nucleotide diphosphate dissociation inhibitor 1 (445 aa).

The protein belongs to the Rab GDI family. In terms of assembly, interacts with the GDP-bound form of RABA5C (via C-terminus). In terms of tissue distribution, expressed in roots, rosette leaves, stems, floral buds and siliques.

Its function is as follows. Regulates the GDP/GTP exchange reaction of most RAB proteins by inhibiting the dissociation of GDP from them, and the subsequent binding of GTP. The polypeptide is Guanosine nucleotide diphosphate dissociation inhibitor 1 (GDI1) (Arabidopsis thaliana (Mouse-ear cress)).